A 921-amino-acid polypeptide reads, in one-letter code: Phototropin-1B (921 aa).

The segment covering Met1–Gly11 has biased composition (gly residues). 2 disordered regions span residues Met1 to Leu59 and Thr88 to Ala118. Residues Ser40–Ala51 show a composition bias toward low complexity. The span at Arg97–Ala117 shows a compositional bias: polar residues. The 75-residue stretch at Val123 to Ser197 folds into the PAS 1 domain. FMN-binding positions include Asn172–Gln177, Arg190, Asn205, Asn215, and Gln236. Cys173 carries the post-translational modification S-4a-FMN cysteine. The region spanning Ser197–Val251 is the PAC 1 domain. The span at Arg286–Thr295 shows a compositional bias: polar residues. Disordered regions lie at residues Arg286–Arg345 and Glu366–Asp391. Basic and acidic residues-rich tracts occupy residues Pro312–Ser321 and Glu366–Asp376. One can recognise a PAS 2 domain in the interval Arg400–Gln473. Residues Asn449–Gln454, Arg467, Asn482, Asn492, and Gln513 contribute to the FMN site. An S-4a-FMN cysteine modification is found at Cys450. The region spanning Ala474–Gly528 is the PAC 2 domain. A Protein kinase domain is found at Phe594–Phe881. ATP is bound by residues Leu600–Val608 and Lys623. The active-site Proton acceptor is Asp719.

It belongs to the protein kinase superfamily. Ser/Thr protein kinase family. Homodimer. The cofactor is FMN. Post-translationally, autophosphorylated in response to blue light irradiation. 2 molecules of FMN bind covalently to cysteines after exposure to blue light and are reversed in the dark.

The catalysed reaction is L-seryl-[protein] + ATP = O-phospho-L-seryl-[protein] + ADP + H(+). It carries out the reaction L-threonyl-[protein] + ATP = O-phospho-L-threonyl-[protein] + ADP + H(+). Protein kinase that acts as a blue light photoreceptor in a signal-transduction pathway for phototropic responses. Regulates a wide range of physiological activities in plants that maximize the efficiency of photosynthesis, such as chloroplast relocations, stomata opening, and leaf expansion. The polypeptide is Phototropin-1B (PHOT1B) (Oryza sativa subsp. japonica (Rice)).